The primary structure comprises 185 residues: MNQYNVKYLAKILCIKTEIARDPYAVINRNVLLRYTTDIQYNDLVTLITVRHKIDSMKTVFQVFNESSINYTPVDDDYGEPIIITSYLQKGHNKFPVNFLYIDVVISDLFPSFVRLNTTETNIVNSVLQTGDGKKTLRLPKMLETEIVVKILYRPNIPLKIVRFFRNNMITGVEIADRSVISVAD.

Belongs to the poxviridae DNA-directed RNA polymerase 22 kDa subunit family. As to quaternary structure, the DNA-dependent RNA polymerase used for intermediate and late genes expression consists of eight subunits Rpo30/OPG66, Rpo7/OPG90, Rpo22/OPG103, Rpo147/OPG105, Rpo18/OPG119, Rpo19/OPG131, Rpo132/OPG151 and Rpo35/OPG156. The same holoenzyme, with the addition of the transcription-specificity factor OPG109, is used for early gene expression.

It localises to the virion. It catalyses the reaction RNA(n) + a ribonucleoside 5'-triphosphate = RNA(n+1) + diphosphate. Its function is as follows. Part of the DNA-dependent RNA polymerase which catalyzes the transcription of viral DNA into RNA using the four ribonucleoside triphosphates as substrates. Responsible for the transcription of early, intermediate and late genes. DNA-dependent RNA polymerase associates with the early transcription factor (ETF), itself composed of OPG118 and OPG133, thereby allowing the early genes transcription. Late transcription, and probably also intermediate transcription, require newly synthesized RNA polymerase. In Variola virus (isolate Human/India/Ind3/1967) (VARV), this protein is DNA-directed RNA polymerase 22 kDa subunit (OPG103).